Here is a 150-residue protein sequence, read N- to C-terminus: Urease accessory protein UreE (150 aa).

The protein belongs to the UreE family.

It localises to the cytoplasm. Functionally, involved in urease metallocenter assembly. Binds nickel. Probably functions as a nickel donor during metallocenter assembly. The polypeptide is Urease accessory protein UreE (Staphylococcus epidermidis (strain ATCC 35984 / DSM 28319 / BCRC 17069 / CCUG 31568 / BM 3577 / RP62A)).